Consider the following 498-residue polypeptide: Diacylglycerol O-acyltransferase 1A (498 aa).

The tract at residues 1–67 (MAISDEPETV…ANSQPQQKQD (67 aa)) is disordered. 7 helical membrane passes run 102–122 (HAGLFNLCIVVLVAVNSRLII), 146–166 (WPLFMCCLSLVVFPFAAFIVE), 178–198 (VVVVLHIIITSASLFYPVLVI), 203–223 (SAFLSGVTLMLFACVVWLKLV), 253–273 (YPYNVSFKSLAYFLVAPTLCY), 295–315 (LIIFTGVMGFIIEQYINPIVQ), and 342–362 (VWLCMFYCFFHLWLNILAELL). An FYXDWWN motif motif is present at residues 369–375 (FYQDWWN). 3 consecutive transmembrane segments (helical) span residues 410–430 (AVALLIAFLVSALFHELCIAV), 432–452 (CHIFKLWAFGGIMFQVPLVFI), and 465–485 (VGNMIFWFIFSILGQPMCVLL). The active site involves histidine 424.

It belongs to the membrane-bound acyltransferase family. Sterol o-acyltransferase subfamily. In terms of tissue distribution, highly expressed in flowers and pods. Expressed at low levels in roots, stems and leaves.

Its subcellular location is the endoplasmic reticulum membrane. The catalysed reaction is an acyl-CoA + a 1,2-diacyl-sn-glycerol = a triacyl-sn-glycerol + CoA. The protein operates within glycerolipid metabolism; triacylglycerol biosynthesis. Major contributor to triacylglycerol (TAG) synthesis and oil accumulation in developing seeds. Catalyzes the acylation of the sn-3 hydroxy group of sn-1,2-diacylglycerol using acyl-CoA. Has a marked preference for oleoyl-CoA (18:1) and sn-1,2-dioleoylglycerol over vernoloyl-CoA and sn-1,2-divernoloylglycerol. Can use oleoyl-CoA, linoleoyl-CoA and linolenoyl-CoA as substrates. The sequence is that of Diacylglycerol O-acyltransferase 1A from Glycine max (Soybean).